The primary structure comprises 268 residues: Cell division cycle-associated protein 3 (268 aa).

Disordered regions lie at residues 1 to 232 and 247 to 268; these read MGSA…SELK and GRAW…LVES. Residues Ser29 and Ser31 each carry the phosphoserine modification. At Thr37 the chain carries Phosphothreonine. Ser44, Ser64, and Ser68 each carry phosphoserine. The span at 56–66 shows a compositional bias: basic and acidic residues; that stretch reads EGLKHAQDSDP. At Thr76 the chain carries Phosphothreonine. A phosphoserine mark is found at Ser87 and Ser94. Residues 91–120 are F-box-like; sequence KQLSEVFETEDSKSNLPPEPVLPPEAPLSS. A compositionally biased stretch (pro residues) spans 107–116; that stretch reads PPEPVLPPEA. Residues 117 to 126 are compositionally biased toward low complexity; the sequence is PLSSELDLPL. 3 stretches are compositionally biased toward polar residues: residues 128–149, 158–169, and 178–194; these read TQLS…SKQV, PTETPVASQSSD, and PRSS…NSSK. The residue at position 199 (Ser199) is a Phosphoserine. Residue Thr202 is modified to Phosphothreonine. Positions 205–215 are enriched in polar residues; the sequence is QDDNSPGTLTL. A Phosphoserine modification is found at Ser209. Position 212 is a phosphothreonine (Thr212). Residues 258–260 carry the KEN box motif; sequence KEN.

As to quaternary structure, interacts with SKP1. Part of a SCF (SKP1-cullin-F-box) protein ligase complex. Ubiquitinated and degraded by the APC/C-Cdh1 complex.

The protein resides in the cytoplasm. It localises to the cytosol. Its pathway is protein modification; protein ubiquitination. F-box-like protein which is required for entry into mitosis. Acts by participating in E3 ligase complexes that mediate the ubiquitination and degradation of WEE1 kinase at G2/M phase. The chain is Cell division cycle-associated protein 3 (CDCA3) from Homo sapiens (Human).